Consider the following 316-residue polypeptide: Beta-ketoacyl-[acyl-carrier-protein] synthase III (316 aa).

Catalysis depends on residues cysteine 112 and histidine 243. An ACP-binding region spans residues 244-248; the sequence is QANLR. Residue asparagine 273 is part of the active site.

This sequence belongs to the thiolase-like superfamily. FabH family. Homodimer.

It localises to the cytoplasm. It catalyses the reaction malonyl-[ACP] + acetyl-CoA + H(+) = 3-oxobutanoyl-[ACP] + CO2 + CoA. The protein operates within lipid metabolism; fatty acid biosynthesis. Functionally, catalyzes the condensation reaction of fatty acid synthesis by the addition to an acyl acceptor of two carbons from malonyl-ACP. Catalyzes the first condensation reaction which initiates fatty acid synthesis and may therefore play a role in governing the total rate of fatty acid production. Possesses both acetoacetyl-ACP synthase and acetyl transacylase activities. Its substrate specificity determines the biosynthesis of branched-chain and/or straight-chain of fatty acids. The protein is Beta-ketoacyl-[acyl-carrier-protein] synthase III of Haemophilus influenzae (strain 86-028NP).